The primary structure comprises 211 residues: Protein G12 (211 aa).

The signal sequence occupies residues 1-19 (MKIAAFVVACLVATSAVSC).

This chain is Protein G12, found in Anopheles gambiae (African malaria mosquito).